Reading from the N-terminus, the 116-residue chain is MNTKKQSRIRRARRARLHIRDLGANRLTVHRTPRHMYAQVISPCGSKVLASASTLEEALRGSATGNKVAAKEVGTLIATRAKAAGVTSVAFDRSGFKYHGRVQVLADAAREAGLEF.

The protein belongs to the universal ribosomal protein uL18 family. Part of the 50S ribosomal subunit; part of the 5S rRNA/L5/L18/L25 subcomplex. Contacts the 5S and 23S rRNAs.

Functionally, this is one of the proteins that bind and probably mediate the attachment of the 5S RNA into the large ribosomal subunit, where it forms part of the central protuberance. In Marinomonas sp. (strain MWYL1), this protein is Large ribosomal subunit protein uL18.